The primary structure comprises 252 residues: MSTSTVIRPVARSLLQLRKAGNTPPAFLLPCLQSSSTTSSCTQSTSFSTSSTHLYPRDMNRLRGVSTQRRTGPRQPLSVSNAKLPQPVLDESKRLKVKVDENHGLYEFFRHKDKALSTPAEEGSHGRPWSAEELRGKSWEDLHSLWWICCKERNRIATESYERQRLEAGYGDEDAEKRDMTVRRTQRAIKQVLTERYYSWQEAEVIAKDDPEIDFSGEGPLYTPRDFEEEFEEDVLAEAEGEAEPKPAQVTA.

The transit peptide at 1 to 39 (MSTSTVIRPVARSLLQLRKAGNTPPAFLLPCLQSSSTTS) directs the protein to the mitochondrion. The span at 233–242 (EDVLAEAEGE) shows a compositional bias: acidic residues. Residues 233–252 (EDVLAEAEGEAEPKPAQVTA) are disordered.

Belongs to the universal ribosomal protein uL29 family. Component of the mitochondrial large ribosomal subunit. Mature mitochondrial ribosomes consist of a small (37S) and a large (54S) subunit. The 37S subunit contains at least 33 different proteins and 1 molecule of RNA (15S). The 54S subunit contains at least 45 different proteins and 1 molecule of RNA (21S).

It is found in the mitochondrion. In Botryotinia fuckeliana (strain B05.10) (Noble rot fungus), this protein is Large ribosomal subunit protein uL29m (mrpl4).